The sequence spans 388 residues: Trichodiene synthase (388 aa).

Positions 109, 173, 234, 238, 242, and 248 each coordinate Mg(2+). The interval 109–113 (DDSRE) is aspartate-rich domain.

The protein belongs to the trichodiene synthase family. Requires Mg(2+) as cofactor. It depends on Mn(2+) as a cofactor.

The catalysed reaction is (2E,6E)-farnesyl diphosphate = trichodiene + diphosphate. It functions in the pathway sesquiterpene biosynthesis; trichothecene biosynthesis. Trichodiene synthase; part of the gene cluster that mediates the production of the antimicrobial trichothecene harzianum A (HA) that plays a role in Botrytis cinerea antagonistic activity and plant defense priming. The biosynthesis of harzianum A begins with the cyclization of farnesyl diphosphate to trichodiene and is catalyzed by the trichodiene synthase TRI5. Trichodiene undergoes a series of oxygenations catalyzed by the cytochrome P450 monooxygenase TRI4. TRI4 controls the addition of 3 oxygens at C-2, C-11, and the C-12, C-13-epoxide to form the intermediate isotrichodiol. Isotrichodiol then undergoes a non-enzymatic isomerization and cyclization to form 12,13-epoxytrichothec-9-ene (EPT) which is further converted to trichodermol by the cytochrome P450 monooxygenase TRI11 via C-4 hydroxylation. The last step of HA synthesis is esterification of an octatriendioyl moiety to the C-4 oxygen of trichodermol. The octatriendioyl moiety is probably produced by the polyketide synthase TRI17 and the esterification performed by the trichothecene O-acetyltransferase TRI3. In Trichoderma arundinaceum, this protein is Trichodiene synthase.